We begin with the raw amino-acid sequence, 1243 residues long: Zinc finger protein ZFAT (1243 aa).

The C2H2-type 1 zinc finger occupies 12-35; that stretch reads FMCKCCNLFSPNQSELLSHVSEKH. Disordered regions lie at residues 51-116 and 147-189; these read PLST…PSSL and GEAG…GKEA. The segment covering 70–81 has biased composition (basic residues); sequence MKRKRGRPKGST. The C2H2-type 2; degenerate zinc finger occupies 116-141; it reads LECSKCCRKFSNTRQLRKHICIIVLN. Residues 156 to 189 are compositionally biased toward basic and acidic residues; it reads ELEKKCKEDDREKASKRPRSQKTEKVQKISGKEA. 7 consecutive C2H2-type zinc fingers follow at residues 271–293, 299–321, 326–349, 354–377, 404–426, 432–454, and 458–481; these read FTCE…LRIH, YKCP…LRKH, FACD…ERVH, QHCR…RDAH, YDCH…MLVH, FACE…VRKH, and YVCA…KEVH. 20 residues coordinate Zn(2+): Cys273, Cys276, His289, His293, Cys301, Cys304, His317, His321, Cys328, Cys331, His344, His349, Cys356, Cys359, His372, His377, Cys406, Cys409, His422, and His426. Residues Cys460, Cys463, His476, and His481 each coordinate Zn(2+). 3 disordered regions span residues 534 to 570, 603 to 625, and 638 to 705; these read EACP…AEST, TSSA…SSVQ, and AQSA…CKAA. Positions 610–620 are enriched in basic and acidic residues; it reads AAPEKPPDMQH. Over residues 638 to 650 the composition is skewed to polar residues; that stretch reads AQSAGSDQESHGA. 10 C2H2-type zinc fingers span residues 742 to 764, 770 to 793, 798 to 822, 830 to 853, 880 to 903, 909 to 931, 937 to 959, 966 to 988, 994 to 1017, and 1041 to 1064; these read LECE…VRTH, YYCS…IQKH, LKCP…LKVH, YSCP…KTNH, MKCP…IWAH, FKCS…MNRH, HLCD…KLLH, FKCT…MEQH, FRCA…NRKH, and LKCP…KNKH. Cys772, Cys775, His788, His793, Cys800, Cys805, His818, His822, Cys832, Cys835, His848, His853, Cys882, Cys885, His899, His903, Cys911, Cys914, His927, His931, Cys939, Cys942, His955, and Leu958 together coordinate Zn(2+).

As to expression, isoform 1 is strongly expressed in placenta, spleen, kidney, testis and peripheral blood leukocytes. Expressed in CD4+ and CD8+ T-cells, CD19+ B-cells and CB14+ monocytes. Isoform 3 is strongly expressed in placenta, ovary, tonsil, CD19+ B-cells and CD14+ monocytes.

It localises to the nucleus. Its subcellular location is the cytoplasm. It is found in the cytosol. In terms of biological role, may be involved in transcriptional regulation. Overexpression causes down-regulation of a number of genes involved in the immune response. Some genes are also up-regulated. The sequence is that of Zinc finger protein ZFAT (ZFAT) from Homo sapiens (Human).